The chain runs to 546 residues: Chaperonin GroEL (546 aa).

ATP is bound by residues 30-33 (TLGP), K51, 87-91 (DGTTT), G415, and D495.

Belongs to the chaperonin (HSP60) family. As to quaternary structure, forms a cylinder of 14 subunits composed of two heptameric rings stacked back-to-back. Interacts with the co-chaperonin GroES.

It localises to the cytoplasm. It catalyses the reaction ATP + H2O + a folded polypeptide = ADP + phosphate + an unfolded polypeptide.. Together with its co-chaperonin GroES, plays an essential role in assisting protein folding. The GroEL-GroES system forms a nano-cage that allows encapsulation of the non-native substrate proteins and provides a physical environment optimized to promote and accelerate protein folding. In Brucella ovis (strain ATCC 25840 / 63/290 / NCTC 10512), this protein is Chaperonin GroEL.